Reading from the N-terminus, the 152-residue chain is Superoxide dismutase [Cu-Zn] (152 aa).

3 residues coordinate Cu cation: histidine 45, histidine 47, and histidine 62. Cysteine 56 and cysteine 145 form a disulfide bridge. Histidine 62, histidine 70, histidine 79, and aspartate 82 together coordinate Zn(2+). Histidine 119 is a binding site for Cu cation.

Belongs to the Cu-Zn superoxide dismutase family. Homodimer. The cofactor is Cu cation. Requires Zn(2+) as cofactor.

It is found in the cytoplasm. The enzyme catalyses 2 superoxide + 2 H(+) = H2O2 + O2. Functionally, destroys radicals which are normally produced within the cells and which are toxic to biological systems. This is Superoxide dismutase [Cu-Zn] (SODCC) from Capsicum annuum (Capsicum pepper).